The sequence spans 231 residues: MASAVKVFLLDIEGTVCPISFVKDVLFPYALEALPHTLDSQWDDPAFAQYRDAFPAEYASSKEALAAHVRDLVSRDVKAPYLKSLQGYLWKNGYDSGEIRAPLFADVAPKFAAWQAAGIAIMIYSSGSVPAQKLLFGHTNSEPADLTSAIADFFDTVNAGPKTEIASYEKIASMHPQYPKNEWLFLSDNVKEVDAALGAGFQSFVVQRPGNPELPDGVEDRHKVIRSFEEL.

2 residues coordinate Mg(2+): aspartate 11 and glutamate 13. Substrate contacts are provided by residues 125–126 (SS) and lysine 162. Aspartate 188 provides a ligand contact to Mg(2+).

This sequence belongs to the HAD-like hydrolase superfamily. MasA/MtnC family. In terms of assembly, monomer. Requires Mg(2+) as cofactor.

It localises to the cytoplasm. The protein localises to the nucleus. It carries out the reaction 5-methylsulfanyl-2,3-dioxopentyl phosphate + H2O = 1,2-dihydroxy-5-(methylsulfanyl)pent-1-en-3-one + phosphate. Its pathway is amino-acid biosynthesis; L-methionine biosynthesis via salvage pathway; L-methionine from S-methyl-5-thio-alpha-D-ribose 1-phosphate: step 3/6. It functions in the pathway amino-acid biosynthesis; L-methionine biosynthesis via salvage pathway; L-methionine from S-methyl-5-thio-alpha-D-ribose 1-phosphate: step 4/6. Functionally, bifunctional enzyme that catalyzes the enolization of 2,3-diketo-5-methylthiopentyl-1-phosphate (DK-MTP-1-P) into the intermediate 2-hydroxy-3-keto-5-methylthiopentenyl-1-phosphate (HK-MTPenyl-1-P), which is then dephosphorylated to form the acireductone 1,2-dihydroxy-3-keto-5-methylthiopentene (DHK-MTPene). The chain is Enolase-phosphatase E1 from Pyricularia oryzae (strain 70-15 / ATCC MYA-4617 / FGSC 8958) (Rice blast fungus).